We begin with the raw amino-acid sequence, 158 residues long: uncharacterized protein (158 aa).

2 consecutive transmembrane segments (helical) span residues 66 to 86 (LLIIVAVLFPPLYISGLPWIM) and 94 to 114 (FFSLSITSFIMVPFLLISLTI).

The protein localises to the membrane. This is an uncharacterized protein from Saccharomyces cerevisiae (strain ATCC 204508 / S288c) (Baker's yeast).